The chain runs to 146 residues: Hemoglobin subunit beta (146 aa).

Val1 is modified (N-acetylvaline). One can recognise a Globin domain in the interval 2–146 (QLSGEEKAAV…VANALAHKYH (145 aa)). Residue Ser44 is modified to Phosphoserine. Lys59 is modified (N6-acetyllysine). His63 is a heme b binding site. An N6-acetyllysine modification is found at Lys82. His92 contacts heme b. Residue Cys93 is modified to S-nitrosocysteine. N6-acetyllysine is present on Lys144.

It belongs to the globin family. In terms of assembly, heterotetramer of two alpha chains and two beta chains. As to expression, red blood cells.

Functionally, involved in oxygen transport from the lung to the various peripheral tissues. In Equus caballus (Horse), this protein is Hemoglobin subunit beta (HBB).